The sequence spans 90 residues: MARVTVQDAVEKVGNRFDLVLIAARRARQMQTGGKDSLVPEENDKPTVIALREIEEGLITKDVLDARERQEQQEQEAAELAAVSSIAHTR.

The segment at arginine 69 to arginine 90 is disordered.

This sequence belongs to the RNA polymerase subunit omega family. In terms of assembly, the RNAP catalytic core consists of 2 alpha, 1 beta, 1 beta' and 1 omega subunit. When a sigma factor is associated with the core the holoenzyme is formed, which can initiate transcription.

It carries out the reaction RNA(n) + a ribonucleoside 5'-triphosphate = RNA(n+1) + diphosphate. Its function is as follows. Promotes RNA polymerase assembly. Latches the N- and C-terminal regions of the beta' subunit thereby facilitating its interaction with the beta and alpha subunits. This Vibrio atlanticus (strain LGP32) (Vibrio splendidus (strain Mel32)) protein is DNA-directed RNA polymerase subunit omega.